Here is a 158-residue protein sequence, read N- to C-terminus: MVVIGFDPGTAITGYGILNKGEDGISIIEYGALTTPSGWGIGRRLNYLFDQVSSLLDLYNPDVVVMENIFFNKNIKTAINIGQAQGVIILAAEQHQKEISILTPLEVKLSVVGYGRATKNQIQYMVKEILKLKDIPKPDDVADALALCISYIYKQEGC.

Active-site residues include Asp7, Glu67, and Asp140. Positions 7, 67, and 140 each coordinate Mg(2+).

The protein belongs to the RuvC family. In terms of assembly, homodimer which binds Holliday junction (HJ) DNA. The HJ becomes 2-fold symmetrical on binding to RuvC with unstacked arms; it has a different conformation from HJ DNA in complex with RuvA. In the full resolvosome a probable DNA-RuvA(4)-RuvB(12)-RuvC(2) complex forms which resolves the HJ. Mg(2+) is required as a cofactor.

It is found in the cytoplasm. The catalysed reaction is Endonucleolytic cleavage at a junction such as a reciprocal single-stranded crossover between two homologous DNA duplexes (Holliday junction).. The RuvA-RuvB-RuvC complex processes Holliday junction (HJ) DNA during genetic recombination and DNA repair. Endonuclease that resolves HJ intermediates. Cleaves cruciform DNA by making single-stranded nicks across the HJ at symmetrical positions within the homologous arms, yielding a 5'-phosphate and a 3'-hydroxyl group; requires a central core of homology in the junction. The consensus cleavage sequence is 5'-(A/T)TT(C/G)-3'. Cleavage occurs on the 3'-side of the TT dinucleotide at the point of strand exchange. HJ branch migration catalyzed by RuvA-RuvB allows RuvC to scan DNA until it finds its consensus sequence, where it cleaves and resolves the cruciform DNA. This is Crossover junction endodeoxyribonuclease RuvC from Dictyoglomus turgidum (strain DSM 6724 / Z-1310).